Consider the following 374-residue polypeptide: Ferroptosis suppressor protein 1 (374 aa).

Residue Gly-2 is the site of N-myristoyl glycine attachment. A helical membrane pass occupies residues 13-35 (VVIVGGGFAGIAAASQLKSFGIP). Residues 17-21 (GGGFA), Arg-53, and Val-81 each bind 6-hydroxy-FAD. Position 167 is an N6-acetyllysine (Lys-167). Residue Asp-285 coordinates 6-hydroxy-FAD.

This sequence belongs to the FAD-dependent oxidoreductase family. 6-hydroxy-FAD serves as cofactor. In terms of processing, N-myristoylation at Gly-2 mediates the recruitment to lipid droplets and plasma membrane. Post-translationally, acetylation at Lys-167 prevents AIFM2 ubiquitination and degradation, thereby inhibiting ferroptosis. KAT2B mediates acetylation at Lys-167, while HDAC3 removes it. Ubiquitinated. AIFM2 undergoes 'Lys-29'-ubiquitination and proteasomal degradation, which is inhibited by acetylation at Lys-167.

It is found in the lipid droplet. Its subcellular location is the cell membrane. The protein resides in the cytoplasm. The protein localises to the mitochondrion membrane. It localises to the nucleus. The enzyme catalyses ubiquinone-10 + NADH + H(+) = ubiquinol-10 + NAD(+). The catalysed reaction is phylloquinone + NADH + H(+) = phylloquinol + NAD(+). It catalyses the reaction menaquinone-4 + NADH + H(+) = menaquinol-4 + NAD(+). It carries out the reaction menadione + NADH + H(+) = menadiol + NAD(+). Its activity is regulated as follows. The modification by 4-hydroxy-2-nonenal (HNE) adduction in mitochondria results in loss of the oxidoreductase activity and activation of a novel function in mitochondrial oxidative stress signaling. In terms of biological role, a NAD(P)H-dependent oxidoreductase that acts as a key inhibitor of ferroptosis. At the plasma membrane, catalyzes reduction of coenzyme Q/ubiquinone-10 to ubiquinol-10, a lipophilic radical-trapping antioxidant that prevents lipid oxidative damage and consequently ferroptosis. Acts in parallel to GPX4 to suppress phospholipid peroxidation and ferroptosis. This anti-ferroptotic function is independent of cellular glutathione levels. Also acts as a potent radical-trapping antioxidant by mediating warfarin-resistant vitamin K reduction in the canonical vitamin K cycle: catalyzes NAD(P)H-dependent reduction of vitamin K (phylloquinone, menaquinone-4 and menadione) to hydroquinone forms. Hydroquinones act as potent radical-trapping antioxidants inhibitor of phospholipid peroxidation and ferroptosis. May play a role in mitochondrial stress signaling. Upon oxidative stress, associates with the lipid peroxidation end product 4-hydroxy-2-nonenal (HNE) forming a lipid adduct devoid of oxidoreductase activity, which then translocates from mitochondria into the nucleus triggering DNA damage and cell death. In Xenopus laevis (African clawed frog), this protein is Ferroptosis suppressor protein 1 (aifm2).